A 115-amino-acid chain; its full sequence is Non-specific lipid-transfer protein 4.3 (115 aa).

A signal peptide spans 1-25 (MARAAATQLVLVAMVAAMLLVATDA). 4 disulfides stabilise this stretch: cysteine 29–cysteine 77, cysteine 39–cysteine 54, cysteine 55–cysteine 97, and cysteine 75–cysteine 111.

It belongs to the plant LTP family.

Plant non-specific lipid-transfer proteins transfer phospholipids as well as galactolipids across membranes. May play a role in wax or cutin deposition in the cell walls of expanding epidermal cells and certain secretory tissues. The chain is Non-specific lipid-transfer protein 4.3 (LTP4.3) from Hordeum vulgare (Barley).